The sequence spans 316 residues: Secondary metabolism regulator laeA (316 aa).

The protein belongs to the methyltransferase superfamily. LaeA methyltransferase family. As to quaternary structure, component of the heterotrimeric velvet complex composed of laeA, veA and velB; VeA acting as a bridging protein between laeA and velB.

It localises to the nucleus. It carries out the reaction L-methionyl-[protein] + S-adenosyl-L-methionine = S-methyl-L-methionyl-[protein] + S-adenosyl-L-homocysteine. Functionally, methyltransferase that performs automethylation. No other methyl-accepting substrate has been identified yet. Component of the velvet transcription factor complex that acts as a global regulator for secondary metabolite gene expression. Controls the biosynthetic gene cluster for beauvericin, a depsipeptide mycotoxin that functions as a virulence determinant. The velvet complex also regulates chromatin structure and transcription of siderophore biosynthetic genes and is required for infection of tomato plants. The velvet complex also governs expression of nitrate metabolism genes. This Fusarium oxysporum f. sp. lycopersici (strain 4287 / CBS 123668 / FGSC 9935 / NRRL 34936) (Fusarium vascular wilt of tomato) protein is Secondary metabolism regulator laeA.